Here is a 744-residue protein sequence, read N- to C-terminus: Protein pthb1 homolog (744 aa).

Residues 722-733 show a composition bias toward basic and acidic residues; that stretch reads EHSPKELPKIRE. Residues 722–744 are disordered; that stretch reads EHSPKELPKIREEEEEEEQQVTA. Residues 734–744 are compositionally biased toward acidic residues; it reads EEEEEEQQVTA.

As to quaternary structure, part of BBSome complex, that contains bbs-1, bbs-2, bbs-4, bbs-5, osm-12, bbs-8/ttc-8 and bbs-9. Interacts with bbs-1.

Its function is as follows. Component of the BBSome complex. The BBSome complex is thought to function as a coat complex required for sorting of specific membrane proteins to the primary cilia. The BBSome complex is required for ciliogenesis but is dispensable for centriolar satellite function. Required for proper BBSome complex assembly and its ciliary localization. Required for cilia biogenesis and both the assembly and movement of intraflagellar transport proteins along the ciliary axoneme. In ciliated sensory neurons, required for the sensation of nitric oxide and avoidance of NO-producing organisms like P.aeruginosa. The sequence is that of Protein pthb1 homolog from Caenorhabditis elegans.